The chain runs to 218 residues: Large ribosomal subunit protein uL3 (218 aa).

The protein belongs to the universal ribosomal protein uL3 family. As to quaternary structure, part of the 50S ribosomal subunit. Forms a cluster with proteins L14 and L19.

One of the primary rRNA binding proteins, it binds directly near the 3'-end of the 23S rRNA, where it nucleates assembly of the 50S subunit. The chain is Large ribosomal subunit protein uL3 from Corynebacterium jeikeium (strain K411).